Here is a 133-residue protein sequence, read N- to C-terminus: Large ribosomal subunit protein bL19 (133 aa).

Residues 114-133 (IAERQMTAASKEEPAEKSEA) form a disordered region. The segment covering 123–133 (SKEEPAEKSEA) has biased composition (basic and acidic residues).

Belongs to the bacterial ribosomal protein bL19 family.

In terms of biological role, this protein is located at the 30S-50S ribosomal subunit interface and may play a role in the structure and function of the aminoacyl-tRNA binding site. In Phenylobacterium zucineum (strain HLK1), this protein is Large ribosomal subunit protein bL19.